Reading from the N-terminus, the 358-residue chain is UDP-N-acetylglucosamine--N-acetylmuramyl-(pentapeptide) pyrophosphoryl-undecaprenol N-acetylglucosamine transferase (358 aa).

Residues 11–13, N120, R161, S188, and Q282 contribute to the UDP-N-acetyl-alpha-D-glucosamine site; that span reads TGG.

Belongs to the glycosyltransferase 28 family. MurG subfamily.

The protein resides in the cell inner membrane. It carries out the reaction di-trans,octa-cis-undecaprenyl diphospho-N-acetyl-alpha-D-muramoyl-L-alanyl-D-glutamyl-meso-2,6-diaminopimeloyl-D-alanyl-D-alanine + UDP-N-acetyl-alpha-D-glucosamine = di-trans,octa-cis-undecaprenyl diphospho-[N-acetyl-alpha-D-glucosaminyl-(1-&gt;4)]-N-acetyl-alpha-D-muramoyl-L-alanyl-D-glutamyl-meso-2,6-diaminopimeloyl-D-alanyl-D-alanine + UDP + H(+). The protein operates within cell wall biogenesis; peptidoglycan biosynthesis. Its function is as follows. Cell wall formation. Catalyzes the transfer of a GlcNAc subunit on undecaprenyl-pyrophosphoryl-MurNAc-pentapeptide (lipid intermediate I) to form undecaprenyl-pyrophosphoryl-MurNAc-(pentapeptide)GlcNAc (lipid intermediate II). This chain is UDP-N-acetylglucosamine--N-acetylmuramyl-(pentapeptide) pyrophosphoryl-undecaprenol N-acetylglucosamine transferase, found in Synechococcus sp. (strain WH7803).